The sequence spans 1496 residues: DENN domain-containing protein 4B (1496 aa).

The MABP domain maps to 44–203; it reads AEPITDVAVI…AVYLCYKVGL (160 aa). Positions 195 to 369 constitute a uDENN domain; sequence VYLCYKVGLA…NVPFPSPQRP (175 aa). One can recognise a cDENN domain in the interval 390–526; sequence PLPLSGASFL…PYKVLLATLT (137 aa). A dDENN domain is found at 528-644; it reads LYQQLDQTYT…ECSFGSARHA (117 aa). Positions 720–744 are disordered; the sequence is QPGALPVPGPSRSAPSSPAPRRTKQ. The span at 729–739 shows a compositional bias: low complexity; that stretch reads PSRSAPSSPAP. 2 PPR repeats span residues 775–811 and 812–846; these read WFLC…VVLP and DEVC…GIVP. 4 disordered regions span residues 891 to 970, 995 to 1055, 1067 to 1119, and 1205 to 1227; these read LRER…ARGA, VPWH…TPRR, PSRH…GSEW, and SRPS…PVPG. Over residues 896–912 the composition is skewed to low complexity; it reads QQQQQQQQQQQQQQQEQ. 2 stretches are compositionally biased toward polar residues: residues 913–924 and 935–944; these read VSAHQEAGSSQA and RPLQRQTTWA. At Ser-953 the chain carries Phosphoserine. Positions 1075–1090 are enriched in pro residues; sequence RIPPPELPPDLPPPAR. A Phosphoserine modification is found at Ser-1092. Residues 1105–1119 show a composition bias toward low complexity; that stretch reads GSTASESSASLGSEW.

Its subcellular location is the golgi apparatus. Functionally, guanine nucleotide exchange factor (GEF) which may activate RAB10. Promotes the exchange of GDP to GTP, converting inactive GDP-bound Rab proteins into their active GTP-bound form. This chain is DENN domain-containing protein 4B (DENND4B), found in Homo sapiens (Human).